A 164-amino-acid polypeptide reads, in one-letter code: 3-isopropylmalate dehydratase small subunit 2 (164 aa).

Belongs to the LeuD family. LeuD type 2 subfamily. In terms of assembly, heterodimer of LeuC and LeuD.

The enzyme catalyses (2R,3S)-3-isopropylmalate = (2S)-2-isopropylmalate. It functions in the pathway amino-acid biosynthesis; L-leucine biosynthesis; L-leucine from 3-methyl-2-oxobutanoate: step 2/4. Catalyzes the isomerization between 2-isopropylmalate and 3-isopropylmalate, via the formation of 2-isopropylmaleate. The polypeptide is 3-isopropylmalate dehydratase small subunit 2 (leuD2) (Pyrococcus furiosus (strain ATCC 43587 / DSM 3638 / JCM 8422 / Vc1)).